We begin with the raw amino-acid sequence, 246 residues long: 2-C-methyl-D-erythritol 4-phosphate cytidylyltransferase (246 aa).

Belongs to the IspD/TarI cytidylyltransferase family. IspD subfamily.

It carries out the reaction 2-C-methyl-D-erythritol 4-phosphate + CTP + H(+) = 4-CDP-2-C-methyl-D-erythritol + diphosphate. The protein operates within isoprenoid biosynthesis; isopentenyl diphosphate biosynthesis via DXP pathway; isopentenyl diphosphate from 1-deoxy-D-xylulose 5-phosphate: step 2/6. Catalyzes the formation of 4-diphosphocytidyl-2-C-methyl-D-erythritol from CTP and 2-C-methyl-D-erythritol 4-phosphate (MEP). The polypeptide is 2-C-methyl-D-erythritol 4-phosphate cytidylyltransferase (Chlorobaculum parvum (strain DSM 263 / NCIMB 8327) (Chlorobium vibrioforme subsp. thiosulfatophilum)).